Here is a 384-residue protein sequence, read N- to C-terminus: PqqA peptide cyclase (384 aa).

The region spanning 5–220 (VGLPLWLLAE…TNEYREKLKA (216 aa)) is the Radical SAM core domain. Cysteine 19, cysteine 23, and cysteine 26 together coordinate [4Fe-4S] cluster.

The protein belongs to the radical SAM superfamily. PqqE family. As to quaternary structure, interacts with PqqD. The interaction is necessary for activity of PqqE. The cofactor is [4Fe-4S] cluster.

It catalyses the reaction [PQQ precursor protein] + S-adenosyl-L-methionine = E-Y cross-linked-[PQQ precursor protein] + 5'-deoxyadenosine + L-methionine + H(+). It functions in the pathway cofactor biosynthesis; pyrroloquinoline quinone biosynthesis. Its function is as follows. Catalyzes the cross-linking of a glutamate residue and a tyrosine residue in the PqqA protein as part of the biosynthesis of pyrroloquinoline quinone (PQQ). The sequence is that of PqqA peptide cyclase from Acinetobacter baumannii (strain SDF).